The primary structure comprises 71 residues: NAD(P)H-quinone oxidoreductase subunit O (71 aa).

The protein belongs to the complex I NdhO subunit family. As to quaternary structure, NDH-1 can be composed of about 15 different subunits; different subcomplexes with different compositions have been identified which probably have different functions.

The protein resides in the cellular thylakoid membrane. It catalyses the reaction a plastoquinone + NADH + (n+1) H(+)(in) = a plastoquinol + NAD(+) + n H(+)(out). The catalysed reaction is a plastoquinone + NADPH + (n+1) H(+)(in) = a plastoquinol + NADP(+) + n H(+)(out). Its function is as follows. NDH-1 shuttles electrons from an unknown electron donor, via FMN and iron-sulfur (Fe-S) centers, to quinones in the respiratory and/or the photosynthetic chain. The immediate electron acceptor for the enzyme in this species is believed to be plastoquinone. Couples the redox reaction to proton translocation, and thus conserves the redox energy in a proton gradient. Cyanobacterial NDH-1 also plays a role in inorganic carbon-concentration. The protein is NAD(P)H-quinone oxidoreductase subunit O of Nostoc punctiforme (strain ATCC 29133 / PCC 73102).